The chain runs to 90 residues: Small ribosomal subunit protein uS15c (90 aa).

It belongs to the universal ribosomal protein uS15 family. As to quaternary structure, part of the 30S ribosomal subunit.

It localises to the plastid. The protein resides in the chloroplast. In Platanus occidentalis (Sycamore), this protein is Small ribosomal subunit protein uS15c (rps15).